Reading from the N-terminus, the 589-residue chain is ATP-dependent lipid A-core flippase (589 aa).

5 helical membrane-spanning segments follow: residues 23 to 43 (WPIF…DAGF), 60 to 80 (LVFI…RGAA), 153 to 173 (VGLL…FLVI), 249 to 269 (VGTS…LFFA), and 272 to 292 (PSFH…IMML). One can recognise an ABC transmembrane type-1 domain in the interval 27 to 307 (LIGVVGMIAV…LTMVNSYIQK (281 aa)). One can recognise an ABC transporter domain in the interval 339–575 (IEYQGVSFAY…NGAYAELYRM (237 aa)). 373–380 (GRSGAGKS) contacts ATP.

Belongs to the ABC transporter superfamily. Lipid exporter (TC 3.A.1.106) family. Homodimer.

The protein localises to the cell inner membrane. The enzyme catalyses ATP + H2O + lipid A-core oligosaccharideSide 1 = ADP + phosphate + lipid A-core oligosaccharideSide 2.. Its function is as follows. Involved in lipopolysaccharide (LPS) biosynthesis. Translocates lipid A-core from the inner to the outer leaflet of the inner membrane. Transmembrane domains (TMD) form a pore in the inner membrane and the ATP-binding domain (NBD) is responsible for energy generation. This is ATP-dependent lipid A-core flippase from Coxiella burnetii (strain RSA 493 / Nine Mile phase I).